A 208-amino-acid chain; its full sequence is Large ribosomal subunit protein bL17 (208 aa).

Residues 122 to 208 (TEKKKKKPAK…ASEEAPPKTE (87 aa)) form a disordered region. Over residues 151–179 (ADTPAPAAEESAPAKAAEPEAEAAAPEAE) the composition is skewed to low complexity.

It belongs to the bacterial ribosomal protein bL17 family. In terms of assembly, part of the 50S ribosomal subunit. Contacts protein L32.

This chain is Large ribosomal subunit protein bL17, found in Desulfosudis oleivorans (strain DSM 6200 / JCM 39069 / Hxd3) (Desulfococcus oleovorans).